The sequence spans 203 residues: Small ribosomal subunit protein uS2 (203 aa).

It belongs to the universal ribosomal protein uS2 family.

This Methanopyrus kandleri (strain AV19 / DSM 6324 / JCM 9639 / NBRC 100938) protein is Small ribosomal subunit protein uS2.